Reading from the N-terminus, the 559-residue chain is Probable D-2-hydroxyglutarate dehydrogenase, mitochondrial (559 aa).

A mitochondrion-targeting transit peptide spans 1–80; that stretch reads MARRAAAGLL…MNFEVQKRSF (80 aa). The 180-residue stretch at 131–310 folds into the FAD-binding PCMH-type domain; the sequence is YKGSSQLLLL…TKIAILTPAK (180 aa).

Belongs to the FAD-binding oxidoreductase/transferase type 4 family. In terms of assembly, homodimer. FAD serves as cofactor.

The protein localises to the mitochondrion. It carries out the reaction (R)-2-hydroxyglutarate + A = 2-oxoglutarate + AH2. In terms of biological role, catalyzes the oxidation of D-2-hydroxyglutarate to alpha-ketoglutarate. The chain is Probable D-2-hydroxyglutarate dehydrogenase, mitochondrial (D2HGDH) from Oryza sativa subsp. indica (Rice).